A 150-amino-acid chain; its full sequence is Large ribosomal subunit protein bL9 (150 aa).

It belongs to the bacterial ribosomal protein bL9 family.

In terms of biological role, binds to the 23S rRNA. The sequence is that of Large ribosomal subunit protein bL9 from Corynebacterium jeikeium (strain K411).